The following is a 115-amino-acid chain: Peptidyl-tRNA hydrolase (115 aa).

It belongs to the PTH2 family.

The protein localises to the cytoplasm. It carries out the reaction an N-acyl-L-alpha-aminoacyl-tRNA + H2O = an N-acyl-L-amino acid + a tRNA + H(+). Its function is as follows. The natural substrate for this enzyme may be peptidyl-tRNAs which drop off the ribosome during protein synthesis. In Methanosarcina acetivorans (strain ATCC 35395 / DSM 2834 / JCM 12185 / C2A), this protein is Peptidyl-tRNA hydrolase.